Here is a 137-residue protein sequence, read N- to C-terminus: Universal stress protein in QAH/OAS sulfhydrylase 3'region (137 aa).

It belongs to the universal stress protein A family.

The chain is Universal stress protein in QAH/OAS sulfhydrylase 3'region from Thermus aquaticus.